The primary structure comprises 505 residues: AMP phosphorylase (505 aa).

AMP-binding positions include glycine 170, 196–201 (SRAITS), and threonine 205. Aspartate 258 acts as the Proton donor in catalysis. Positions 266 and 290 each coordinate AMP.

This sequence belongs to the thymidine/pyrimidine-nucleoside phosphorylase family. Type 2 subfamily.

The enzyme catalyses AMP + phosphate = alpha-D-ribose 1,5-bisphosphate + adenine. The catalysed reaction is CMP + phosphate = cytosine + alpha-D-ribose 1,5-bisphosphate. It catalyses the reaction UMP + phosphate = alpha-D-ribose 1,5-bisphosphate + uracil. Functionally, catalyzes the conversion of AMP and phosphate to adenine and ribose 1,5-bisphosphate (R15P). Exhibits phosphorylase activity toward CMP and UMP in addition to AMP. Functions in an archaeal AMP degradation pathway, together with R15P isomerase and RubisCO. This chain is AMP phosphorylase, found in Methanococcus maripaludis (strain C6 / ATCC BAA-1332).